Consider the following 249-residue polypeptide: MSRVLRLGVNIDHVATIRNARGGDHPDPLRAAKIAAEAGADGITAHLREDRRHIGDRDIARLRDEIDLPLNLEMAATAEMLAIALRHRPHAACIVPEKREERTTEGGLDVVGGAVHLAPIITALGEAGVRVSLFIEPDLRQLDAARALGAPVVELHTGAYCDAAAGPAREAQFLRIDKAARHAQALGLECHAGHGLTYDTVEPVAALPAIAELNIGHFLIGEAIFVGLHQAIARMRAHMDAALRGGVAA.

Asn-10 contributes to the 3-amino-2-oxopropyl phosphate binding site. Residue 12 to 13 coordinates 1-deoxy-D-xylulose 5-phosphate; sequence DH. 3-amino-2-oxopropyl phosphate is bound at residue Arg-21. The active-site Proton acceptor is His-46. 1-deoxy-D-xylulose 5-phosphate contacts are provided by Arg-48 and His-53. Glu-73 functions as the Proton acceptor in the catalytic mechanism. Thr-103 contacts 1-deoxy-D-xylulose 5-phosphate. His-194 acts as the Proton donor in catalysis. Residues Gly-195 and 216 to 217 contribute to the 3-amino-2-oxopropyl phosphate site; that span reads GH.

Belongs to the PNP synthase family. Homooctamer; tetramer of dimers.

It is found in the cytoplasm. It catalyses the reaction 3-amino-2-oxopropyl phosphate + 1-deoxy-D-xylulose 5-phosphate = pyridoxine 5'-phosphate + phosphate + 2 H2O + H(+). It functions in the pathway cofactor biosynthesis; pyridoxine 5'-phosphate biosynthesis; pyridoxine 5'-phosphate from D-erythrose 4-phosphate: step 5/5. Its function is as follows. Catalyzes the complicated ring closure reaction between the two acyclic compounds 1-deoxy-D-xylulose-5-phosphate (DXP) and 3-amino-2-oxopropyl phosphate (1-amino-acetone-3-phosphate or AAP) to form pyridoxine 5'-phosphate (PNP) and inorganic phosphate. The protein is Pyridoxine 5'-phosphate synthase of Rhodospirillum rubrum (strain ATCC 11170 / ATH 1.1.1 / DSM 467 / LMG 4362 / NCIMB 8255 / S1).